The chain runs to 371 residues: Leu/Ile/Val-binding protein homolog 2 (371 aa).

The N-terminal stretch at 1-23 (MKKSLFCGVCLCALVAMGGTSFA) is a signal peptide.

It belongs to the leucine-binding protein family.

Its function is as follows. Component of an amino-acid transport system. This Brucella abortus (strain 2308) protein is Leu/Ile/Val-binding protein homolog 2.